Here is a 233-residue protein sequence, read N- to C-terminus: Ion-translocating oxidoreductase complex subunit E (233 aa).

Transmembrane regions (helical) follow at residues 18–38 (ALVQ…ATNA), 39–59 (LGLG…VSAL), 69–89 (IPIY…LINA), 92–112 (FGLY…CIVI), 128–148 (ALDG…LGAL), and 182–202 (PFLL…LLAG).

The protein belongs to the NqrDE/RnfAE family. The complex is composed of six subunits: RnfA, RnfB, RnfC, RnfD, RnfE and RnfG.

The protein localises to the cell inner membrane. Its function is as follows. Part of a membrane-bound complex that couples electron transfer with translocation of ions across the membrane. The protein is Ion-translocating oxidoreductase complex subunit E of Yersinia pestis bv. Antiqua (strain Angola).